The primary structure comprises 262 residues: Ribosomal RNA small subunit methyltransferase A (262 aa).

H16, L18, G43, E64, D89, and N109 together coordinate S-adenosyl-L-methionine.

The protein belongs to the class I-like SAM-binding methyltransferase superfamily. rRNA adenine N(6)-methyltransferase family. RsmA subfamily.

Its subcellular location is the cytoplasm. It catalyses the reaction adenosine(1518)/adenosine(1519) in 16S rRNA + 4 S-adenosyl-L-methionine = N(6)-dimethyladenosine(1518)/N(6)-dimethyladenosine(1519) in 16S rRNA + 4 S-adenosyl-L-homocysteine + 4 H(+). In terms of biological role, specifically dimethylates two adjacent adenosines (A1518 and A1519) in the loop of a conserved hairpin near the 3'-end of 16S rRNA in the 30S particle. May play a critical role in biogenesis of 30S subunits. The protein is Ribosomal RNA small subunit methyltransferase A of Xanthomonas campestris pv. campestris (strain 8004).